A 1622-amino-acid chain; its full sequence is Ferredoxin-dependent glutamate synthase 1, chloroplastic/mitochondrial (1622 aa).

The transit peptide at 1 to 105 directs the protein to the chloroplast and mitochondrion; it reads MAMQSLSPVP…LEDILSERGA (105 aa). Cysteine 106 serves as the catalytic For GATase activity. The region spanning 106–505 is the Glutamine amidotransferase type-2 domain; it reads CGVGFIANLD…PGMMIAVDLV (400 aa). Residue 1184-1241 coordinates FMN; it reads LTETHQTLIANGLRERVILRVDGGLKSGVDVLMAAAMGADEYGFGSLAMIATGCVMAR. Cysteine 1237, cysteine 1243, and cysteine 1248 together coordinate [3Fe-4S] cluster.

This sequence belongs to the glutamate synthase family. Interacts with SHM1. Requires [3Fe-4S] cluster as cofactor. FAD is required as a cofactor. The cofactor is FMN. In terms of tissue distribution, highly expressed in leaves. High expression in the leaf mesophyll and phloem companion cell-sieve element complex.

The protein localises to the plastid. The protein resides in the chloroplast stroma. It is found in the mitochondrion matrix. It carries out the reaction 2 oxidized [2Fe-2S]-[ferredoxin] + 2 L-glutamate = L-glutamine + 2 reduced [2Fe-2S]-[ferredoxin] + 2-oxoglutarate + 2 H(+). It participates in amino-acid biosynthesis; L-glutamate biosynthesis via GLT pathway; L-glutamate from 2-oxoglutarate and L-glutamine (ferredoxin route): step 1/1. The protein operates within energy metabolism; nitrogen metabolism. Involved in glutamate biosynthesis in leaf. Required for the reassimilation of ammonium ions generated during photorespiration. This chain is Ferredoxin-dependent glutamate synthase 1, chloroplastic/mitochondrial, found in Arabidopsis thaliana (Mouse-ear cress).